Here is a 132-residue protein sequence, read N- to C-terminus: MLQSIPALPVGDIKKSIGFYCDKLGFTLVHHEDGFAVLMCNEVRIHLWEASDEGWRSRSNDSPVCTGAESFIAGTASCRIEVEGIDELYQHIKPLGILHPNTSLKDQWWDERDFAVIDPDNNLISFFQQIKS.

The 129-residue stretch at 1-129 (MLQSIPALPV…DNNLISFFQQ (129 aa)) folds into the VOC domain.

It belongs to the bleomycin resistance protein family.

Binding protein with a strong affinity to the bleomycin family of antibiotics. The sequence is that of Bleomycin resistance protein (bleO) from Geobacillus stearothermophilus (Bacillus stearothermophilus).